A 414-amino-acid polypeptide reads, in one-letter code: Serine hydroxymethyltransferase (414 aa).

(6S)-5,6,7,8-tetrahydrofolate-binding positions include leucine 117 and 121 to 123 (GHL). Position 226 is an N6-(pyridoxal phosphate)lysine (lysine 226). 349 to 351 (SPF) provides a ligand contact to (6S)-5,6,7,8-tetrahydrofolate.

The protein belongs to the SHMT family. As to quaternary structure, homodimer. Requires pyridoxal 5'-phosphate as cofactor.

It localises to the cytoplasm. It catalyses the reaction (6R)-5,10-methylene-5,6,7,8-tetrahydrofolate + glycine + H2O = (6S)-5,6,7,8-tetrahydrofolate + L-serine. The protein operates within one-carbon metabolism; tetrahydrofolate interconversion. Its pathway is amino-acid biosynthesis; glycine biosynthesis; glycine from L-serine: step 1/1. Catalyzes the reversible interconversion of serine and glycine with tetrahydrofolate (THF) serving as the one-carbon carrier. This reaction serves as the major source of one-carbon groups required for the biosynthesis of purines, thymidylate, methionine, and other important biomolecules. Also exhibits THF-independent aldolase activity toward beta-hydroxyamino acids, producing glycine and aldehydes, via a retro-aldol mechanism. In Desulfovibrio desulfuricans (strain ATCC 27774 / DSM 6949 / MB), this protein is Serine hydroxymethyltransferase.